Reading from the N-terminus, the 247-residue chain is Carboxy-S-adenosyl-L-methionine synthase (247 aa).

Residues tyrosine 40, 65–67 (GAS), 90–91 (DN), 122–123 (DI), asparagine 137, and arginine 204 each bind S-adenosyl-L-methionine.

Belongs to the class I-like SAM-binding methyltransferase superfamily. Cx-SAM synthase family. In terms of assembly, homodimer.

It catalyses the reaction prephenate + S-adenosyl-L-methionine = carboxy-S-adenosyl-L-methionine + 3-phenylpyruvate + H2O. In terms of biological role, catalyzes the conversion of S-adenosyl-L-methionine (SAM) to carboxy-S-adenosyl-L-methionine (Cx-SAM). This is Carboxy-S-adenosyl-L-methionine synthase from Pseudomonas fluorescens (strain Pf0-1).